Reading from the N-terminus, the 151-residue chain is D-aminoacyl-tRNA deacylase (151 aa).

A Gly-cisPro motif, important for rejection of L-amino acids motif is present at residues Gly-136–Pro-137.

It belongs to the DTD family. As to quaternary structure, homodimer.

It is found in the cytoplasm. The catalysed reaction is glycyl-tRNA(Ala) + H2O = tRNA(Ala) + glycine + H(+). It catalyses the reaction a D-aminoacyl-tRNA + H2O = a tRNA + a D-alpha-amino acid + H(+). Its function is as follows. An aminoacyl-tRNA editing enzyme that deacylates mischarged D-aminoacyl-tRNAs. Also deacylates mischarged glycyl-tRNA(Ala), protecting cells against glycine mischarging by AlaRS. Acts via tRNA-based rather than protein-based catalysis; rejects L-amino acids rather than detecting D-amino acids in the active site. By recycling D-aminoacyl-tRNA to D-amino acids and free tRNA molecules, this enzyme counteracts the toxicity associated with the formation of D-aminoacyl-tRNA entities in vivo and helps enforce protein L-homochirality. The chain is D-aminoacyl-tRNA deacylase from Lactococcus lactis subsp. cremoris (strain MG1363).